A 160-amino-acid polypeptide reads, in one-letter code: MMIIIPNNEIAKHMLTDFFAKHWGTPEMAISSGIFRCDELDGFAAVNESGEIIGCITYTIDGKDCEIISLDSMIENKGIGTALLQQVEEKAKHAHCQRIKLITTNDNVNAIAFYQKRGYQFAAVFPNAVEKARRLKPEIPEVAENGILIRDEILFSKVID.

Residues 2–140 (MIIIPNNEIA…KARRLKPEIP (139 aa)) enclose the N-acetyltransferase domain.

This is an uncharacterized protein from Bacillus subtilis (strain 168).